A 347-amino-acid chain; its full sequence is Phosphate acyltransferase (347 aa).

It belongs to the PlsX family. Homodimer. Probably interacts with PlsY.

It localises to the cytoplasm. It carries out the reaction a fatty acyl-[ACP] + phosphate = an acyl phosphate + holo-[ACP]. Its pathway is lipid metabolism; phospholipid metabolism. Catalyzes the reversible formation of acyl-phosphate (acyl-PO(4)) from acyl-[acyl-carrier-protein] (acyl-ACP). This enzyme utilizes acyl-ACP as fatty acyl donor, but not acyl-CoA. This Methylobacillus flagellatus (strain ATCC 51484 / DSM 6875 / VKM B-1610 / KT) protein is Phosphate acyltransferase.